Reading from the N-terminus, the 300-residue chain is Non-secreted LysM effector LysM16 (300 aa).

One can recognise a LysM domain in the interval 176 to 222 (EWHTVFSGDTCQLIEAEYGITLEKFIALNTYVNSTCGNIWPDYAYCV).

Belongs to the secreted LysM effector family.

Its function is as follows. Non-secreted LysM effector that might be involved in manipulation of host defenses for successful infection. This is Non-secreted LysM effector LysM16 from Penicillium expansum (Blue mold rot fungus).